Here is a 193-residue protein sequence, read N- to C-terminus: uncharacterized protein (193 aa).

Disordered stretches follow at residues 1 to 67 (MSGP…GPRS) and 110 to 160 (QRTP…LPGS). 2 stretches are compositionally biased toward low complexity: residues 50–64 (GPQR…ARPG) and 148–160 (AGAS…LPGS).

This is an uncharacterized protein from Homo sapiens (Human).